The sequence spans 122 residues: Large ribosomal subunit protein uL18 (122 aa).

The protein belongs to the universal ribosomal protein uL18 family. As to quaternary structure, part of the 50S ribosomal subunit; part of the 5S rRNA/L5/L18/L25 subcomplex. Contacts the 5S and 23S rRNAs.

In terms of biological role, this is one of the proteins that bind and probably mediate the attachment of the 5S RNA into the large ribosomal subunit, where it forms part of the central protuberance. In Thermosipho africanus (strain TCF52B), this protein is Large ribosomal subunit protein uL18.